Reading from the N-terminus, the 376-residue chain is Actin, macronuclear (376 aa).

Belongs to the actin family.

The protein localises to the cytoplasm. The protein resides in the cytoskeleton. The enzyme catalyses ATP + H2O = ADP + phosphate + H(+). Actins are highly conserved proteins that are involved in various types of cell motility and are ubiquitously expressed in all eukaryotic cells. This is Actin, macronuclear from Tetrahymena thermophila.